Consider the following 295-residue polypeptide: Protoheme IX farnesyltransferase 2 (295 aa).

The next 9 membrane-spanning stretches (helical) occupy residues 9 to 29, 36 to 56, 80 to 100, 108 to 128, 135 to 155, 163 to 183, 209 to 229, 230 to 250, and 265 to 285; these read ITKP…FFLA, LAVF…GCVF, LISL…GVAL, LAAL…SLYL, GTLV…VAVT, LTLL…IAIF, ILIY…SGYA, GMSY…MAWT, and FVFS…DFKV.

It belongs to the UbiA prenyltransferase family. Protoheme IX farnesyltransferase subfamily.

It localises to the cell inner membrane. The enzyme catalyses heme b + (2E,6E)-farnesyl diphosphate + H2O = Fe(II)-heme o + diphosphate. Its pathway is porphyrin-containing compound metabolism; heme O biosynthesis; heme O from protoheme: step 1/1. Converts heme B (protoheme IX) to heme O by substitution of the vinyl group on carbon 2 of heme B porphyrin ring with a hydroxyethyl farnesyl side group. The chain is Protoheme IX farnesyltransferase 2 from Pseudomonas fluorescens (strain Pf0-1).